A 472-amino-acid polypeptide reads, in one-letter code: Kynureninase 2 (472 aa).

Pyridoxal 5'-phosphate is bound by residues Leu-133, Thr-134, 162–165 (FPSD), Asp-247, His-250, and Tyr-272. N6-(pyridoxal phosphate)lysine is present on Lys-273. Positions 314 and 342 each coordinate pyridoxal 5'-phosphate.

This sequence belongs to the kynureninase family. As to quaternary structure, homodimer. Requires pyridoxal 5'-phosphate as cofactor.

The protein resides in the cytoplasm. It catalyses the reaction L-kynurenine + H2O = anthranilate + L-alanine + H(+). It carries out the reaction 3-hydroxy-L-kynurenine + H2O = 3-hydroxyanthranilate + L-alanine + H(+). The protein operates within amino-acid degradation; L-kynurenine degradation; L-alanine and anthranilate from L-kynurenine: step 1/1. It participates in cofactor biosynthesis; NAD(+) biosynthesis; quinolinate from L-kynurenine: step 2/3. In terms of biological role, catalyzes the cleavage of L-kynurenine (L-Kyn) and L-3-hydroxykynurenine (L-3OHKyn) into anthranilic acid (AA) and 3-hydroxyanthranilic acid (3-OHAA), respectively. This chain is Kynureninase 2 (kyn-2), found in Neurospora crassa (strain ATCC 24698 / 74-OR23-1A / CBS 708.71 / DSM 1257 / FGSC 987).